A 342-amino-acid polypeptide reads, in one-letter code: S-adenosylmethionine:tRNA ribosyltransferase-isomerase (342 aa).

The protein belongs to the QueA family. Monomer.

The protein resides in the cytoplasm. The enzyme catalyses 7-aminomethyl-7-carbaguanosine(34) in tRNA + S-adenosyl-L-methionine = epoxyqueuosine(34) in tRNA + adenine + L-methionine + 2 H(+). Its pathway is tRNA modification; tRNA-queuosine biosynthesis. Transfers and isomerizes the ribose moiety from AdoMet to the 7-aminomethyl group of 7-deazaguanine (preQ1-tRNA) to give epoxyqueuosine (oQ-tRNA). This chain is S-adenosylmethionine:tRNA ribosyltransferase-isomerase, found in Streptococcus agalactiae serotype V (strain ATCC BAA-611 / 2603 V/R).